The following is a 234-amino-acid chain: Cytochrome b (234 aa).

Helical transmembrane passes span 33–53 (FGSL…FLAM), 77–98 (WLIR…YMHV), 113–133 (WNIG…GYVL), and 178–198 (FFAF…IHLL). H83 and H97 together coordinate heme b. 2 residues coordinate heme b: H182 and H196. Residue H201 coordinates a ubiquinone. The helical transmembrane segment at 226-234 (IKDVLGFLM) threads the bilayer.

The protein belongs to the cytochrome b family. In terms of assembly, the cytochrome bc1 complex contains 11 subunits: 3 respiratory subunits (MT-CYB, CYC1 and UQCRFS1), 2 core proteins (UQCRC1 and UQCRC2) and 6 low-molecular weight proteins (UQCRH/QCR6, UQCRB/QCR7, UQCRQ/QCR8, UQCR10/QCR9, UQCR11/QCR10 and a cleavage product of UQCRFS1). This cytochrome bc1 complex then forms a dimer. Heme b is required as a cofactor.

It is found in the mitochondrion inner membrane. Its function is as follows. Component of the ubiquinol-cytochrome c reductase complex (complex III or cytochrome b-c1 complex) that is part of the mitochondrial respiratory chain. The b-c1 complex mediates electron transfer from ubiquinol to cytochrome c. Contributes to the generation of a proton gradient across the mitochondrial membrane that is then used for ATP synthesis. The protein is Cytochrome b (MT-CYB) of Lepus alleni (Antelope jackrabbit).